The following is a 331-amino-acid chain: MDEKTKIYDITIIGGGPVGLFAAFYAGMRNASVKIIESLPQLGGQLSTLYPEKYIYDIPGYPSVRAQELVNNLIQQMKPFDPTVALEEAVQSVEKQVDGTFEIITKKDTHYSKAIIITAGNGAFEPRRLDLPEAEQYEGKNIHYFINDLSRFSGRRVAVCGGGDSAVDWALMLEKVASSVSIVHRRNAFRAHEHSVNNLEKSSIAIKTPFIPTEVLGNGDKLTHITLQEVKGDTTETLEIDDFIINYGFVSSLGPIKNWGLELERNSIIVNSKMETNIPGIYCAGDICTYDGKVKLIATGFGEAPTAVNNAMNFIDPKTRVQPMHSTSLFE.

Positions 37, 45, 50, 90, 124, 286, and 327 each coordinate FAD.

This sequence belongs to the ferredoxin--NADP reductase type 2 family. In terms of assembly, homodimer. The cofactor is FAD.

The enzyme catalyses 2 reduced [2Fe-2S]-[ferredoxin] + NADP(+) + H(+) = 2 oxidized [2Fe-2S]-[ferredoxin] + NADPH. This Listeria innocua serovar 6a (strain ATCC BAA-680 / CLIP 11262) protein is Ferredoxin--NADP reductase 2.